The sequence spans 535 residues: Keratin, type II cytoskeletal 79 (535 aa).

Composition is skewed to polar residues over residues 1–12 (MRSSVSRQTYST) and 28–38 (QARTSFSSVTV). The interval 1 to 53 (MRSSVSRQTYSTKGAFSSSSASGGGGSQARTSFSSVTVSRNSGRGGGPRCGPS) is disordered. Residues 1 to 141 (MRSSVSRQTY…DPEIQRVRTE (141 aa)) are head. Residues 43 to 53 (GRGGGPRCGPS) show a composition bias toward gly residues. A coil 1A region spans residues 142–177 (EREQIKTLNNKFASFIDKVRFLEQQNKVLETKWALL). In terms of domain architecture, IF rod spans 142–457 (EREQIKTLNN…KLLESEESRM (316 aa)). Residues 178–198 (QEQGQKSGVTRNNLEPLFEHF) are linker 1. The coil 1B stretch occupies residues 199-290 (INNLRGKLDN…HLYEEELSQV (92 aa)). The tract at residues 291 to 314 (QTHVSDTSVILSMDNNRNLDLDSI) is linker 12. Positions 315–453 (IAEVKAQYEQ…ATYRKLLESE (139 aa)) are coil 2. A tail region spans residues 454-535 (ESRMSGECPS…TTVKTSSRRY (82 aa)).

Belongs to the intermediate filament family. In terms of assembly, heterotetramer of two type I and two type II keratins.

This chain is Keratin, type II cytoskeletal 79 (KRT79), found in Bos taurus (Bovine).